The sequence spans 130 residues: MAKVPSRSPRKRVRKQVADGMAHIHASFNNTIITITDRQGNALSWATSGGSGFRGSRKSTPFAAQVAAERAGVAAQDYGVKNLEVFVKGPGPGRESAIRALNSVGYKITNITDVTPIPHNGCRPPKKRRV.

The protein belongs to the universal ribosomal protein uS11 family. In terms of assembly, part of the 30S ribosomal subunit. Interacts with proteins S7 and S18. Binds to IF-3.

Its function is as follows. Located on the platform of the 30S subunit, it bridges several disparate RNA helices of the 16S rRNA. Forms part of the Shine-Dalgarno cleft in the 70S ribosome. The sequence is that of Small ribosomal subunit protein uS11 from Shewanella sediminis (strain HAW-EB3).